A 585-amino-acid polypeptide reads, in one-letter code: Nitrogen permease regulator 3-like protein (585 aa).

The segment at 117 to 157 is disordered; the sequence is GEWAKRRKPRTTVESNASSSHLVSKPESSHPSTGSFEVKSS. The span at 128–138 shows a compositional bias: polar residues; that stretch reads TVESNASSSHL. Residues 148–157 show a composition bias toward low complexity; it reads STGSFEVKSS.

The protein belongs to the NPR3 family.

This Schizosaccharomyces pombe (strain 972 / ATCC 24843) (Fission yeast) protein is Nitrogen permease regulator 3-like protein.